The following is a 416-amino-acid chain: Imidazolonepropionase (416 aa).

H82 and H84 together coordinate Fe(3+). H82 and H84 together coordinate Zn(2+). Positions 91, 154, and 187 each coordinate 4-imidazolone-5-propanoate. Residue Y154 coordinates N-formimidoyl-L-glutamate. Fe(3+) is bound at residue H252. H252 contributes to the Zn(2+) binding site. E255 is a binding site for 4-imidazolone-5-propanoate. D326 is a binding site for Fe(3+). D326 contacts Zn(2+). N-formimidoyl-L-glutamate is bound by residues N328 and G330. Position 331 (S331) interacts with 4-imidazolone-5-propanoate.

The protein belongs to the metallo-dependent hydrolases superfamily. HutI family. It depends on Zn(2+) as a cofactor. Fe(3+) is required as a cofactor.

The protein localises to the cytoplasm. The enzyme catalyses 4-imidazolone-5-propanoate + H2O = N-formimidoyl-L-glutamate. Its pathway is amino-acid degradation; L-histidine degradation into L-glutamate; N-formimidoyl-L-glutamate from L-histidine: step 3/3. Catalyzes the hydrolytic cleavage of the carbon-nitrogen bond in imidazolone-5-propanoate to yield N-formimidoyl-L-glutamate. It is the third step in the universal histidine degradation pathway. The polypeptide is Imidazolonepropionase (Parabacteroides distasonis (strain ATCC 8503 / DSM 20701 / CIP 104284 / JCM 5825 / NCTC 11152)).